The primary structure comprises 329 residues: MAVTMADITKLRKMSGAGMMDCKKALTESDGDIEKAMEIIRKKGQAIAAKRSDREAAEGCVLAKKDGEFAAIIALKCETDFVAKNEDFVALTQAILDAAVANKCRTLDEVKALPMGKGTIQEAVTDRSGITGEKMELDGYCVVEGAYTTVYNHMGKNQLCTIAAFNKESEEAAHNIVMQIAAMNPIAIDEAGVPESVKEKEIQVAIEKTKAEQVQKAVEAALKKAGINPSHVDSEAHMESNMDKGWITAEDVAKAKEIIATVSAEKAANLPQQMIENIAKGRLGKFLKEVCLLNQEDIMDGKKTVRETMKEIDPELQILAFKRFTLRAE.

Residues 79–82 (TDFV) form an involved in Mg(2+) ion dislocation from EF-Tu region.

Belongs to the EF-Ts family.

Its subcellular location is the cytoplasm. Associates with the EF-Tu.GDP complex and induces the exchange of GDP to GTP. It remains bound to the aminoacyl-tRNA.EF-Tu.GTP complex up to the GTP hydrolysis stage on the ribosome. In Parabacteroides distasonis (strain ATCC 8503 / DSM 20701 / CIP 104284 / JCM 5825 / NCTC 11152), this protein is Elongation factor Ts.